A 379-amino-acid polypeptide reads, in one-letter code: Glucose-1-phosphate adenylyltransferase (379 aa).

Alpha-D-glucose 1-phosphate is bound by residues G164, 179–180 (EK), and S190.

The protein belongs to the bacterial/plant glucose-1-phosphate adenylyltransferase family. As to quaternary structure, homotetramer.

The enzyme catalyses alpha-D-glucose 1-phosphate + ATP + H(+) = ADP-alpha-D-glucose + diphosphate. The protein operates within glycan biosynthesis; glycogen biosynthesis. In terms of biological role, involved in the biosynthesis of ADP-glucose, a building block required for the elongation reactions to produce glycogen. Catalyzes the reaction between ATP and alpha-D-glucose 1-phosphate (G1P) to produce pyrophosphate and ADP-Glc. In Streptococcus agalactiae serotype Ia (strain ATCC 27591 / A909 / CDC SS700), this protein is Glucose-1-phosphate adenylyltransferase.